We begin with the raw amino-acid sequence, 42 residues long: Photosystem I reaction center subunit IX (42 aa).

The chain crosses the membrane as a helical span at residues 7–27 (YLSVAPVLSTLWFGALAGLLI).

Belongs to the PsaJ family.

It localises to the plastid. The protein localises to the chloroplast thylakoid membrane. In terms of biological role, may help in the organization of the PsaE and PsaF subunits. The protein is Photosystem I reaction center subunit IX of Guizotia abyssinica (Niger).